The chain runs to 263 residues: Metaxin-2 (263 aa).

N-acetylserine is present on serine 2.

This sequence belongs to the metaxin family. In terms of assembly, interacts with MTX1/metaxin-1. Associates with the mitochondrial contact site and cristae organizing system (MICOS) complex, composed of at least MICOS10/MIC10, CHCHD3/MIC19, CHCHD6/MIC25, APOOL/MIC27, IMMT/MIC60, APOO/MIC23/MIC26 and QIL1/MIC13. This complex was also known under the names MINOS or MitOS complex. The MICOS complex associates with mitochondrial outer membrane proteins SAMM50, MTX1 and MTX2 (together described as components of the mitochondrial outer membrane sorting assembly machinery (SAM) complex) and DNAJC11, mitochondrial inner membrane protein TMEM11 and with HSPA9. The MICOS and SAM complexes together with DNAJC11 are part of a large protein complex spanning both membranes termed the mitochondrial intermembrane space bridging (MIB) complex.

The protein resides in the mitochondrion outer membrane. The protein localises to the mitochondrion. Involved in transport of proteins into the mitochondrion. This Mus musculus (Mouse) protein is Metaxin-2 (Mtx2).